The chain runs to 900 residues: Probable 2-oxoadipate dehydrogenase complex component E1 homolog (900 aa).

Belongs to the alpha-ketoglutarate dehydrogenase family. Thiamine diphosphate is required as a cofactor.

It localises to the mitochondrion. The catalysed reaction is N(6)-[(R)-lipoyl]-L-lysyl-[protein] + 2-oxoadipate + H(+) = N(6)-[(R)-S(8)-glutaryldihydrolipoyl]-L-lysyl-[protein] + CO2. Its function is as follows. 2-oxoadipate dehydrogenase (E1a) component of the 2-oxoadipate dehydrogenase complex (OADHC). Participates in the first step, rate limiting for the overall conversion of 2-oxoadipate (alpha-ketoadipate) to glutaryl-CoA and CO(2) catalyzed by the whole OADHC. Catalyzes the irreversible decarboxylation of 2-oxoadipate via the thiamine diphosphate (ThDP) cofactor and subsequent transfer of the decarboxylated acyl intermediate on an oxidized dihydrolipoyl group that is covalently amidated to the E2 enzyme (dihydrolipoyllysine-residue succinyltransferase or DLST). The chain is Probable 2-oxoadipate dehydrogenase complex component E1 homolog (odhA) from Dictyostelium discoideum (Social amoeba).